The primary structure comprises 156 residues: Large ribosomal subunit protein uL30 (156 aa).

The protein belongs to the universal ribosomal protein uL30 family. Part of the 50S ribosomal subunit.

This is Large ribosomal subunit protein uL30 from Thermofilum pendens (strain DSM 2475 / Hrk 5).